The chain runs to 381 residues: Homoserine O-succinyltransferase (381 aa).

Residues 45–360 (NAVLVCHALN…PHGHDAFLLD (316 aa)) form the AB hydrolase-1 domain. Ser151 (nucleophile) is an active-site residue. Residue Arg221 participates in substrate binding. Residues Asp321 and His354 contribute to the active site. A substrate-binding site is contributed by Asp355.

The protein belongs to the AB hydrolase superfamily. MetX family. As to quaternary structure, homodimer.

The protein resides in the cytoplasm. The enzyme catalyses L-homoserine + succinyl-CoA = O-succinyl-L-homoserine + CoA. Its pathway is amino-acid biosynthesis; L-methionine biosynthesis via de novo pathway; O-succinyl-L-homoserine from L-homoserine: step 1/1. Transfers a succinyl group from succinyl-CoA to L-homoserine, forming succinyl-L-homoserine. This is Homoserine O-succinyltransferase from Burkholderia cenocepacia (strain HI2424).